The chain runs to 1029 residues: Collagen, type I, alpha 1b (1029 aa).

The tract at residues 1–990 is disordered; it reads QMSYVDHSKS…KAPDPFRGGH (990 aa). A compositionally biased stretch (pro residues) spans 13–33; it reads PPQPGPMGPMGPRGPPGPPGS. Over residues 34 to 57 the composition is skewed to low complexity; sequence SGPQGFTGPPGEPGEPGASGAMGS. The segment covering 67–81 has biased composition (basic and acidic residues); the sequence is NGDDGEPGKPGRPGE. 3 stretches are compositionally biased toward low complexity: residues 82–91, 120–129, and 136–147; these read RGAAGPQGAR, VPGVMGARGR, and SGARGNDGNTGP. Gly residues predominate over residues 163-182; it reads PGGAGAKGETGPAGGRGNEG. 3 stretches are compositionally biased toward low complexity: residues 199 to 223, 233 to 267, and 299 to 309; these read AGPA…AGLA, AQGA…PGPA, and ERGAPGARGFP. Residues 310–322 show a composition bias toward gly residues; it reads GADGGAGGKGAPG. Low complexity-rich tracts occupy residues 323–351 and 429–465; these read ERGA…PGSK and VGAP…QGAT. Gly residues predominate over residues 466 to 477; sequence GETGKGLGGPTG. A compositionally biased stretch (low complexity) spans 478–497; the sequence is PRGAPGPAGNDGAKGEPGAA. 2 stretches are compositionally biased toward gly residues: residues 498-507 and 531-540; these read GAPGGLGAPG and GGKGGDGAPG. Low complexity-rich tracts occupy residues 571–580 and 593–620; these read VAGPTGPRGA and AGFA…KGDA. Gly residues-rich tracts occupy residues 621-630 and 645-654; these read GAPGPGGPVG and GARGGAGPPG. 5 stretches are compositionally biased toward low complexity: residues 655 to 665, 694 to 722, 731 to 743, 830 to 839, and 855 to 869; these read ATGFPGPAGRV, ETGA…PGXD, PQGL…LPGQ, APGAVGPSGK, and SGPA…PAGA. Over residues 870-884 the composition is skewed to basic and acidic residues; sequence KGDRGEAGEAGDRGG. The span at 906–934 shows a compositional bias: low complexity; the sequence is PAGASGPAGPRGPAGSNGAPGKDGMNGLP. Pro residues predominate over residues 952–967; the sequence is AGPPGPPGPAGPPGPP. The Fibrillar collagen NC1 domain occupies 999-1029; the sequence is TQKLPLLDLAPMDVGAPDQEFGVEVGPVCFL.

It belongs to the fibrillar collagen family.

It is found in the secreted. Its subcellular location is the extracellular space. It localises to the extracellular matrix. The sequence is that of Collagen, type I, alpha 1b from Epinephelus aeneus (White grouper).